The primary structure comprises 456 residues: Protein ESC2 (456 aa).

Over residues 1–24 (MTGDSRSISEPSINLDPDNTSFSD) the composition is skewed to polar residues. Residues 1–154 (MTGDSRSISE…SSIRSISPAG (154 aa)) are disordered. A compositionally biased stretch (acidic residues) spans 25–43 (ENSDDFFMDNSYDIDEIDH). A compositionally biased stretch (polar residues) spans 83–93 (QSLSRSSSKNV). A phosphoserine mark is found at S90, S125, and S126. Residues 169-287 (ENDDFFKELA…QDFENEVSDI (119 aa)) form an SUMO-like region 1 repeat. Positions 301 to 360 (EATLESKLKEEEAALLIKERQEMERKLEKKRNEQEESEYREFESELKNVEETQEIKENDT) form a coiled coil. Residues 380–456 (MEEVMRIALM…DEDMVDVIID (77 aa)) form an SUMO-like region 2 repeat.

In terms of assembly, component of a cullin-RING ligase (CRL)-like complex composed of at least the cullin RTT101, a linker protein MMS1, and the potential substrate receptor ESC2. Interacts with RTT101 and MMS1. Interacts with SIR2.

The protein localises to the cytoplasm. Its subcellular location is the nucleus. May be a substrate targeting component of a cullin-RING-based E3 ubiquitin-protein ligase complex RTT101(MMS1-ESC2). Involved in HMR and telomere silencing via the recruitment or stabilizing of the SIR (silent information regulators) complex. The polypeptide is Protein ESC2 (ESC2) (Saccharomyces cerevisiae (strain ATCC 204508 / S288c) (Baker's yeast)).